The primary structure comprises 536 residues: MEKRALIAVILSIVFFYGYSALFPPPKKEAPAPSAQQAVTGSQPGAPQASVAAVPAPSPVPAAAVKAQQKEIAVETPDYTAVFSTQGGSLTRLVLKKYRETADLTGKHVTLVDERDPSAYTLSTRAAGIGLDPSALFVSSADSLTVEAGEEKKELAFTWISPAGVTVRKIYTFQGGNYGIDMVYQTANSGTARVGAAFQTVMTYPAVPRVKESRLETFGPVTFAQDKLTEEKVKDLVGQGKSYSAPLWSGFADKYFLSAVVGQGGSIATAAVRSTPRGMLEDTITAPETSLNPGESKSVAYRLYFGPKDLDILKAQGNSLERAIDLGWFAMLAKPLLHSLKFFYKYVHNYGIAIIIITVILKIIFYPLTHSSYKSMKQMQKLQPKMQEVREKYKNDRDAMNKAIMELYQTHKVNPVGGCLPMLVQIPVFFALYKALMFSIELRHAPFMLWIQDLAGKDPYYVTPIIMGITMVIQQKMTPSQMDPMQQKMMMALPVVFTFMFLNFPSGLVLYWLVNNVLTIIQQSYINKSIAAAEAK.

A helical transmembrane segment spans residues 5-25; sequence ALIAVILSIVFFYGYSALFPP. The disordered stretch occupies residues 30–54; that stretch reads APAPSAQQAVTGSQPGAPQASVAAV. Positions 31–54 are enriched in low complexity; that stretch reads PAPSAQQAVTGSQPGAPQASVAAV. 4 consecutive transmembrane segments (helical) span residues 350 to 370, 420 to 440, 454 to 474, and 494 to 514; these read YGIA…PLTH, LPML…MFSI, LAGK…MVIQ, and PVVF…YWLV.

Belongs to the OXA1/ALB3/YidC family. Type 1 subfamily. In terms of assembly, interacts with the Sec translocase complex via SecD. Specifically interacts with transmembrane segments of nascent integral membrane proteins during membrane integration.

The protein resides in the cell inner membrane. In terms of biological role, required for the insertion and/or proper folding and/or complex formation of integral membrane proteins into the membrane. Involved in integration of membrane proteins that insert both dependently and independently of the Sec translocase complex, as well as at least some lipoproteins. Aids folding of multispanning membrane proteins. In Geobacter metallireducens (strain ATCC 53774 / DSM 7210 / GS-15), this protein is Membrane protein insertase YidC.